The primary structure comprises 398 residues: Acetate kinase (398 aa).

Asn7 serves as a coordination point for Mg(2+). Position 14 (Lys14) interacts with ATP. Residue Arg91 coordinates substrate. Asp148 acts as the Proton donor/acceptor in catalysis. Residues 208–212 (HLGNG), 283–285 (DFR), and 331–335 (GIGEH) contribute to the ATP site. Glu386 provides a ligand contact to Mg(2+).

This sequence belongs to the acetokinase family. Homodimer. Mg(2+) serves as cofactor. It depends on Mn(2+) as a cofactor.

It localises to the cytoplasm. The enzyme catalyses acetate + ATP = acetyl phosphate + ADP. Its pathway is metabolic intermediate biosynthesis; acetyl-CoA biosynthesis; acetyl-CoA from acetate: step 1/2. Catalyzes the formation of acetyl phosphate from acetate and ATP. Can also catalyze the reverse reaction. The protein is Acetate kinase of Clostridium botulinum (strain Eklund 17B / Type B).